Reading from the N-terminus, the 577-residue chain is Maltase A1 (577 aa).

Positions 1 to 19 (MRPQSAACLLLAIVGFVGA) are cleaved as a signal peptide. N-linked (GlcNAc...) asparagine glycans are attached at residues Asn-119 and Asn-151. The Nucleophile role is filled by Asp-221. Asn-244 carries an N-linked (GlcNAc...) asparagine glycan. Glu-297 serves as the catalytic Proton donor. Asn-315 and Asn-331 each carry an N-linked (GlcNAc...) asparagine glycan.

The protein belongs to the glycosyl hydrolase 13 family.

It catalyses the reaction Hydrolysis of terminal, non-reducing (1-&gt;4)-linked alpha-D-glucose residues with release of alpha-D-glucose.. The sequence is that of Maltase A1 (Mal-A1) from Drosophila melanogaster (Fruit fly).